We begin with the raw amino-acid sequence, 514 residues long: Periplasmic [NiFeSe] hydrogenase large subunit (514 aa).

Glu-52 lines the Fe cation pocket. Positions 71 and 74 each coordinate Ni(2+). The Fe cation site is built by Cys-74 and Ile-445. Ni(2+) contacts are provided by Sec-493 and Cys-496. Residue Sec-493 is a non-standard amino acid, selenocysteine. 2 residues coordinate Fe cation: Cys-496 and His-499.

Belongs to the [NiFe]/[NiFeSe] hydrogenase large subunit family. Heterodimer of a large and a small subunit. The cofactor is Fe cation. Ni(2+) is required as a cofactor.

The protein resides in the periplasm. It carries out the reaction H2 + A = AH2. This Desulfomicrobium baculatum (Desulfovibrio baculatus) protein is Periplasmic [NiFeSe] hydrogenase large subunit.